The primary structure comprises 67 residues: Large ribosomal subunit protein bL31 (67 aa).

Cysteine 16, cysteine 18, cysteine 36, and cysteine 39 together coordinate Zn(2+).

Belongs to the bacterial ribosomal protein bL31 family. Type A subfamily. As to quaternary structure, part of the 50S ribosomal subunit. It depends on Zn(2+) as a cofactor.

Its function is as follows. Binds the 23S rRNA. This is Large ribosomal subunit protein bL31 from Desulforudis audaxviator (strain MP104C).